Reading from the N-terminus, the 185-residue chain is Lactoylglutathione lyase (185 aa).

Residues 1 to 22 form a disordered region; sequence MASEARESPANNPGLSTNRDEA. The VOC domain occupies 27–174; that stretch reads IMQQTMFRIK…DGYWIEIFDL (148 aa). 2 residues coordinate substrate: Gln-30 and Arg-34. Gln-30 serves as a coordination point for Zn(2+). Glu-96 provides a ligand contact to Zn(2+). Substrate-binding positions include Asn-100, Arg-120, His-124, and 154 to 155; that span reads KM. Residue His-124 participates in Zn(2+) binding. Glu-170 lines the Zn(2+) pocket. The Proton donor/acceptor role is filled by Glu-170.

It belongs to the glyoxalase I family. Requires Zn(2+) as cofactor.

It carries out the reaction (R)-S-lactoylglutathione = methylglyoxal + glutathione. It functions in the pathway secondary metabolite metabolism; methylglyoxal degradation; (R)-lactate from methylglyoxal: step 1/2. In terms of biological role, catalyzes the conversion of hemimercaptal, formed from methylglyoxal and glutathione, to S-lactoylglutathione. This is Lactoylglutathione lyase from Arabidopsis thaliana (Mouse-ear cress).